The chain runs to 198 residues: MIRYPNGKSYQPKTAASSLQKKPSYSNRGMTLEDDLNETNMYYQSHSIAVIHKKPTPVQIVQVDYPKRSAAVIKEAYFKQSSTTDYNGVYKGRYIDFEAKETKSRTSFPLQNFHDHQIEHMKQVVAQDGICFVIISAFEEIYFLEAEKLFYFWERKKQNGRKSIRKDELQEAAHPISLGYSPRIDYIKIIDQLYFSPS.

Residues 1–29 form a disordered region; it reads MIRYPNGKSYQPKTAASSLQKKPSYSNRG. A compositionally biased stretch (polar residues) spans 8-29; the sequence is KSYQPKTAASSLQKKPSYSNRG. Mg(2+) contacts are provided by threonine 83, aspartate 85, glutamate 98, and glutamine 117.

The protein belongs to the RecU family. Mg(2+) is required as a cofactor.

The protein resides in the cytoplasm. It carries out the reaction Endonucleolytic cleavage at a junction such as a reciprocal single-stranded crossover between two homologous DNA duplexes (Holliday junction).. In terms of biological role, endonuclease that resolves Holliday junction intermediates in genetic recombination. Cleaves mobile four-strand junctions by introducing symmetrical nicks in paired strands. Promotes annealing of linear ssDNA with homologous dsDNA. Required for DNA repair, homologous recombination and chromosome segregation. This Bacillus licheniformis (strain ATCC 14580 / DSM 13 / JCM 2505 / CCUG 7422 / NBRC 12200 / NCIMB 9375 / NCTC 10341 / NRRL NRS-1264 / Gibson 46) protein is Holliday junction resolvase RecU.